The chain runs to 400 residues: Serine/threonine transporter SstT (400 aa).

A run of 9 helical transmembrane segments spans residues Ile-14–Tyr-34, Ser-48–Gly-68, Val-76–Leu-96, Ala-136–Met-156, Ile-177–Phe-197, Leu-211–Val-231, Ile-285–Leu-305, Leu-311–Ala-331, and Cys-349–Val-371.

The protein belongs to the dicarboxylate/amino acid:cation symporter (DAACS) (TC 2.A.23) family.

It is found in the cell inner membrane. It carries out the reaction L-serine(in) + Na(+)(in) = L-serine(out) + Na(+)(out). The enzyme catalyses L-threonine(in) + Na(+)(in) = L-threonine(out) + Na(+)(out). In terms of biological role, involved in the import of serine and threonine into the cell, with the concomitant import of sodium (symport system). The sequence is that of Serine/threonine transporter SstT from Acinetobacter baumannii (strain AB307-0294).